Consider the following 69-residue polypeptide: Brevinin-1CG5 (69 aa).

Positions 1–22 (MFTLKKSLLLLFFLGTINLSLC) are cleaved as a signal peptide. A propeptide spans 23-43 (EQERNAEEERRDDDEMDVEVE) (removed in mature form). An intrachain disulfide couples cysteine 63 to cysteine 69.

This sequence belongs to the frog skin active peptide (FSAP) family. Brevinin subfamily. Expressed by the skin glands.

The protein resides in the secreted. In terms of biological role, antimicrobial peptide active against a variety of Gram-positive and Gram-negative bacterial strains. Has antifungal activity against C.albicans ATCC 10231 and a slime mold isolate. Has hemolytic activity against human erythrocytes. The polypeptide is Brevinin-1CG5 (Amolops chunganensis (Chungan torrent frog)).